The chain runs to 336 residues: MADFHEFYPLRRHNTFGFDVRARYASHIRSEADLLAALNDPRAVGLPLVVLGGGSNVVLTGDLDALVLLMEIPGFRVGTAPDAWLVTAGAGENWHGLVCRTIAEGLPGLENLALIPGTVGAAPIQNIGAYGVELRERFASVRALDRQTMRFVDLDLEQCAFSYRDSLFKQAGRDRYIITAVTLRLSRDWQPVLAYGELAREVEGNAAPDAAAIRDAVIAIRSRKLPDPAQIGNAGSFFKNPLVSAEQRDVLLASHPDLVSYAQPDGSFKLAAGWLIDRCGFKGLNDGPVGVYGKQALVLVHHGGGTGAALLALAGRIADTVQARFGVRIEPEPVVL.

The 172-residue stretch at 17–188 folds into the FAD-binding PCMH-type domain; sequence GFDVRARYAS…TAVTLRLSRD (172 aa). Arginine 164 is an active-site residue. The active-site Proton donor is the serine 236. Glutamate 332 is a catalytic residue.

Belongs to the MurB family. The cofactor is FAD.

The protein localises to the cytoplasm. The enzyme catalyses UDP-N-acetyl-alpha-D-muramate + NADP(+) = UDP-N-acetyl-3-O-(1-carboxyvinyl)-alpha-D-glucosamine + NADPH + H(+). It participates in cell wall biogenesis; peptidoglycan biosynthesis. In terms of biological role, cell wall formation. In Cupriavidus pinatubonensis (strain JMP 134 / LMG 1197) (Cupriavidus necator (strain JMP 134)), this protein is UDP-N-acetylenolpyruvoylglucosamine reductase.